The chain runs to 104 residues: Pyrimidine/purine nucleoside phosphorylase (104 aa).

The protein belongs to the nucleoside phosphorylase PpnP family.

The catalysed reaction is a purine D-ribonucleoside + phosphate = a purine nucleobase + alpha-D-ribose 1-phosphate. It catalyses the reaction adenosine + phosphate = alpha-D-ribose 1-phosphate + adenine. The enzyme catalyses cytidine + phosphate = cytosine + alpha-D-ribose 1-phosphate. It carries out the reaction guanosine + phosphate = alpha-D-ribose 1-phosphate + guanine. The catalysed reaction is inosine + phosphate = alpha-D-ribose 1-phosphate + hypoxanthine. It catalyses the reaction thymidine + phosphate = 2-deoxy-alpha-D-ribose 1-phosphate + thymine. The enzyme catalyses uridine + phosphate = alpha-D-ribose 1-phosphate + uracil. It carries out the reaction xanthosine + phosphate = alpha-D-ribose 1-phosphate + xanthine. In terms of biological role, catalyzes the phosphorolysis of diverse nucleosides, yielding D-ribose 1-phosphate and the respective free bases. Can use uridine, adenosine, guanosine, cytidine, thymidine, inosine and xanthosine as substrates. Also catalyzes the reverse reactions. In Geotalea daltonii (strain DSM 22248 / JCM 15807 / FRC-32) (Geobacter daltonii), this protein is Pyrimidine/purine nucleoside phosphorylase.